The following is a 100-amino-acid chain: Urease subunit gamma (100 aa).

The protein belongs to the urease gamma subunit family. In terms of assembly, heterotrimer of UreA (gamma), UreB (beta) and UreC (alpha) subunits. Three heterotrimers associate to form the active enzyme.

The protein localises to the cytoplasm. The catalysed reaction is urea + 2 H2O + H(+) = hydrogencarbonate + 2 NH4(+). It functions in the pathway nitrogen metabolism; urea degradation; CO(2) and NH(3) from urea (urease route): step 1/1. This chain is Urease subunit gamma, found in Roseobacter denitrificans (strain ATCC 33942 / OCh 114) (Erythrobacter sp. (strain OCh 114)).